The following is a 1053-amino-acid chain: Translation initiation factor IF-2 (1053 aa).

A compositionally biased stretch (polar residues) spans 1–20 (MSESKNSGENTLSVTPTKTL). The interval 1 to 442 (MSESKNSGEN…TATGGEEEER (442 aa)) is disordered. Composition is skewed to low complexity over residues 64–76 (EAAPTPAPAATVT) and 83–102 (RPAAPNPTAAPTTPPAAAVP). 2 stretches are compositionally biased toward pro residues: residues 131-141 (PAQPKAEPVPA) and 150-161 (APVPPVPAPSAP). The span at 178–220 (PVSQAKPIQTAPVQTAPAAQASASQTTGPRPVAAGPRPATGAA) shows a compositional bias: low complexity. Over residues 255–264 (GGRGGPGRGE) the composition is skewed to gly residues. Basic and acidic residues-rich tracts occupy residues 279–288 (LTDEEREARA) and 295–353 (RIRE…EAKR). The segment covering 375–386 (TATAAAPAAAAP) has biased composition (low complexity). Residues 550–720 (PRPPVVTIMG…ALQAELLDLK (171 aa)) form the tr-type G domain. Residues 559 to 566 (GHVDHGKT) are G1. A GTP-binding site is contributed by 559 to 566 (GHVDHGKT). The segment at 584–588 (GITQH) is G2. A G3 region spans residues 606-609 (DTPG). GTP-binding positions include 606-610 (DTPGH) and 660-663 (NKID). The interval 660-663 (NKID) is G4. A G5 region spans residues 696-698 (SAT).

This sequence belongs to the TRAFAC class translation factor GTPase superfamily. Classic translation factor GTPase family. IF-2 subfamily.

It is found in the cytoplasm. Its function is as follows. One of the essential components for the initiation of protein synthesis. Protects formylmethionyl-tRNA from spontaneous hydrolysis and promotes its binding to the 30S ribosomal subunits. Also involved in the hydrolysis of GTP during the formation of the 70S ribosomal complex. This Beijerinckia indica subsp. indica (strain ATCC 9039 / DSM 1715 / NCIMB 8712) protein is Translation initiation factor IF-2.